Reading from the N-terminus, the 282-residue chain is Uridylate-specific endoribonuclease B (282 aa).

The 275-residue stretch at 4-278 (GDRELSALIQ…IGTTYPVPVK (275 aa)) folds into the EndoU domain. Active-site residues include histidine 156, histidine 172, and lysine 218.

This sequence belongs to the ENDOU family. Monomer. It depends on Mn(2+) as a cofactor.

The enzyme catalyses ribonucleotidyl-uridine-RNA = a 5'-end dephospho-uridine-RNA + a 3'-end 2',3'-cyclophospho-ribonucleotide-RNA. Its function is as follows. Endoribonuclease that cleaves single-stranded RNAs at 5' of uridylates and releases a product with a 2',3'-cyclic phosphate at the 3'-end. The UU and GU sites are more efficiently cleaved than CU and AU sites. In Danio rerio (Zebrafish), this protein is Uridylate-specific endoribonuclease B (endoub).